Consider the following 317-residue polypeptide: Small ribosomal subunit protein uS2 (317 aa).

Disordered stretches follow at residues 1–30 (MENE…ASKE) and 293–317 (RSFE…EVAE). The span at 18–30 (MAEKADDSKASKE) shows a compositional bias: basic and acidic residues. The span at 308–317 (KTTTSTEVAE) shows a compositional bias: low complexity.

The protein belongs to the universal ribosomal protein uS2 family.

The protein is Small ribosomal subunit protein uS2 of Mycoplasmopsis agalactiae (strain NCTC 10123 / CIP 59.7 / PG2) (Mycoplasma agalactiae).